A 1024-amino-acid polypeptide reads, in one-letter code: Importin-8 (1024 aa).

An Importin N-terminal domain is found at 22-102; that stretch reads AENELNQSYK…RENMVEAIIR (81 aa). Residues 896–969 are disordered; that stretch reads FGRAQGSEEE…YSTPLDCDNG (74 aa). Acidic residues-rich tracts occupy residues 902–917 and 934–952; these read SEEE…EDEV and DNED…DEGL.

Belongs to the importin beta family.

Its subcellular location is the cytoplasm. The protein resides in the nucleus. Functionally, involved in nuclear protein import, either by acting as autonomous nuclear transport receptor or as an adapter-like protein in association with the importin-beta subunit KPNB1. Acting autonomously, may serve as receptor for nuclear localization signals (NLS) and promote translocation of import substrates through the nuclear pore complex (NPC) by an energy requiring, Ran-dependent mechanism. At the nucleoplasmic side of the NPC, Ran binds to importin, the importin/substrate complex dissociates and importin is re-exported from the nucleus to the cytoplasm where GTP hydrolysis releases Ran. The directionality of nuclear import is thought to be conferred by an asymmetric distribution of the GTP- and GDP-bound forms of Ran between the cytoplasm and nucleus. In vitro mediates the nuclear import of the signal recognition particle protein SRP19. May also be involved in cytoplasm-to-nucleus shuttling of a broad spectrum of other cargos, including Argonaute-microRNAs complexes, the JUN protein, RELA/NF-kappa-B p65 subunit, the translation initiation factor EIF4E and a set of receptor-activated mothers against decapentaplegic homolog (SMAD) transcription factors that play a critical role downstream of the large family of transforming growth factor beta and bone morphogenetic protein (BMP) cytokines. This Danio rerio (Zebrafish) protein is Importin-8 (ipo8).